Reading from the N-terminus, the 1729-residue chain is 1,3-beta-glucan synthase component bgs1 (1729 aa).

Serine 23 is modified (phosphoserine). A run of 6 helical transmembrane segments spans residues 378-398 (WTACGLAGAIASFITLAAVVF), 416-436 (SMLLLISTLLLNIAPVVFIFA), 448-468 (LVVGIVHFFFSLVCVVYYSIT), 503-523 (FVSWCLWITVLVAKFLESYFF), 546-566 (YILGAGLCKAQPKILLSLLYL), and 577-597 (YLWYILISTIYSLAYAFCLGI). Serine 784 and serine 788 each carry phosphoserine. Helical transmembrane passes span 1180 to 1200 (MVIMFSLQLLMLVIINLGAMY), 1237 to 1257 (ILSIFIVFGIAFVPLAVCELG), 1337 to 1357 (MLLFGSITAWLPHYIYFWITL), 1440 to 1460 (YGEILGPLGTLFFTCIPFLFI), 1484 to 1504 (VAPLVLSAIIAFFFFCLGIML), 1515 to 1535 (YGVYLAGVAHFLFVCVDVVVF), 1550 to 1572 (LLGFVAIISIHRFAHKFFIICFL), and 1678 to 1698 (ATLYFSLFIAFFVLLILPFVF).

This sequence belongs to the glycosyltransferase 48 family. In terms of assembly, component of the 1,3-beta-glucan synthase (GS) complex, composed of at least the alternate catalytic subunits bgs1, bgs2, bgs3, and bgs4, and a regulatory subunit chr4.

Its subcellular location is the cell membrane. The protein resides in the cell septum. The catalysed reaction is [(1-&gt;3)-beta-D-glucosyl](n) + UDP-alpha-D-glucose = [(1-&gt;3)-beta-D-glucosyl](n+1) + UDP + H(+). Alternate catalytic subunit of the 1,3-beta-glucan synthase (GS) complex. Synthesizes 1,3-beta-glucan, a major structural component of the fungal cell wall. Required for the assembly of the division septum and maintenance of cell polarity. This Schizosaccharomyces pombe (strain 972 / ATCC 24843) (Fission yeast) protein is 1,3-beta-glucan synthase component bgs1 (bgs1).